Reading from the N-terminus, the 108-residue chain is Parvalbumin beta (108 aa).

2 consecutive EF-hand domains span residues 38-73 (KSTD…FSST) and 77-108 (LTAA…LVKA). Asp-51, Asp-53, Ser-55, Phe-57, Glu-59, Glu-62, Asp-90, Asp-92, Asp-94, Lys-96, and Glu-101 together coordinate Ca(2+).

It belongs to the parvalbumin family.

In muscle, parvalbumin is thought to be involved in relaxation after contraction. It binds two calcium ions. In Graptemys geographica (Common map turtle), this protein is Parvalbumin beta.